A 182-amino-acid chain; its full sequence is 3-hydroxyanthranilate 3,4-dioxygenase (182 aa).

Arg46 is an O2 binding site. Residues His50, Glu56, and His96 each coordinate Fe cation. Glu56 contributes to the substrate binding site. Arg100 and Glu111 together coordinate substrate. 4 residues coordinate Fe cation: Cys126, Cys129, Cys163, and Cys166.

It belongs to the 3-HAO family. Homodimer. It depends on Fe(2+) as a cofactor.

The enzyme catalyses 3-hydroxyanthranilate + O2 = (2Z,4Z)-2-amino-3-carboxymuconate 6-semialdehyde. It functions in the pathway cofactor biosynthesis; NAD(+) biosynthesis; quinolinate from L-kynurenine: step 3/3. Its function is as follows. Catalyzes the oxidative ring opening of 3-hydroxyanthranilate to 2-amino-3-carboxymuconate semialdehyde, which spontaneously cyclizes to quinolinate. The polypeptide is 3-hydroxyanthranilate 3,4-dioxygenase (Brucella anthropi (strain ATCC 49188 / DSM 6882 / CCUG 24695 / JCM 21032 / LMG 3331 / NBRC 15819 / NCTC 12168 / Alc 37) (Ochrobactrum anthropi)).